Reading from the N-terminus, the 159-residue chain is 17 kDa surface antigen (159 aa).

Residues Met-1 to Ala-19 form the signal peptide. The N-palmitoyl cysteine moiety is linked to residue Cys-20. A lipid anchor (S-diacylglycerol cysteine) is attached at Cys-20.

It belongs to the rickettsiale 17 kDa surface antigen family.

Its subcellular location is the cell outer membrane. The chain is 17 kDa surface antigen (omp) from Rickettsia bellii.